The sequence spans 416 residues: Enterobactin exporter EntS (416 aa).

The Cytoplasmic portion of the chain corresponds to 1-21 (MNKQSWLLNLSLLKTHPAFRA). A helical transmembrane segment spans residues 22–42 (VFLARFISIVSLGLLGVAVPV). Over 43–55 (QIQMMTHSTWQVG) the chain is Periplasmic. A helical membrane pass occupies residues 56–76 (LSVTLTGGAMFVGLMVGGVLA). Residues 77 to 83 (DRYERKK) are Cytoplasmic-facing. A helical membrane pass occupies residues 84–104 (VILLARGTCGIGFIGLCLNAL). The Periplasmic portion of the chain corresponds to 105 to 109 (LPEPS). Residues 110-130 (LLAIYLLGLWDGFFASLGVTA) traverse the membrane as a helical segment. The Cytoplasmic segment spans residues 131-156 (LLAATPALVGRENLMQAGAITMLTVR). Residues 157–177 (LGSVISPMIGGLLLATGGVAW) form a helical membrane-spanning segment. Residue Asn-178 is a topological domain, periplasmic. Residues 179 to 199 (YGLAAAGTFITLLPLLSLPAL) form a helical membrane-spanning segment. Topologically, residues 200–218 (PPPPQPREHPLKSLLAGFR) are cytoplasmic. Residues 219–239 (FLLASPLVGGIALLGGLLTMA) form a helical membrane-spanning segment. The Periplasmic segment spans residues 240–256 (SAVRVLYPALADNWQMS). A helical membrane pass occupies residues 257 to 277 (AAQIGFLYAAIPLGAAIGALT). Residues 278 to 287 (SGKLAHSVRP) lie on the Cytoplasmic side of the membrane. Residues 288–307 (GLLMLLSTLGAFLAIGLFGL) traverse the membrane as a helical segment. At 308-313 (MPMWIL) the chain is on the periplasmic side. Residues 314 to 336 (GVVCLALFGWLSAVSSLLQYTML) traverse the membrane as a helical segment. Topologically, residues 337–356 (QTQTPEAMLGRINGLWTAQN) are cytoplasmic. The chain crosses the membrane as a helical span at residues 357–377 (VTGDAIGAALLGGLGAMMTPV). Ala-378 is a topological domain (periplasmic). A helical membrane pass occupies residues 379-399 (SASASGFGLLIIGVLLLLVLV). The Cytoplasmic portion of the chain corresponds to 400 to 416 (ELRRFRQTPPQVTASGS).

Belongs to the major facilitator superfamily. EntS (TC 2.A.1.38) family.

Its subcellular location is the cell inner membrane. Its function is as follows. Component of an export pathway for enterobactin. This chain is Enterobactin exporter EntS, found in Escherichia coli O6:K15:H31 (strain 536 / UPEC).